We begin with the raw amino-acid sequence, 536 residues long: Protein GvpD1 (536 aa).

ATP is bound at residue 39–46; sequence GAPGTGKT. The segment at 352–413 is disordered; it reads GPSDSADRYD…SDQPHPIDED (62 aa). Polar residues predominate over residues 363–372; it reads PDSTESFSEM. A compositionally biased stretch (low complexity) spans 373–385; that stretch reads ATTTPPDDAPTAT. The span at 386–396 shows a compositional bias: basic and acidic residues; that stretch reads HETDGADDGSR.

It belongs to the gas vesicle GvpD family. As to quaternary structure, interacts with GvpE.

Its subcellular location is the cytoplasm. Functionally, causes a decrease in the amount of GvpE protein. The 5'-region of its promoter or mRNA has a repressive function on downstream genes. Gas vesicles are hollow, gas filled proteinaceous nanostructures found in several microbial planktonic microorganisms. They allow positioning of halobacteria at the optimal depth for growth in the poorly aerated, shallow brine pools of their habitat. In terms of biological role, expression of a 9.5 kb p-vac DNA fragment containing 2 divergently transcribed regions (gvpD-gvpE-gvpF-gvpG-gvpH-gvpI-gvpJ-gvpK-gvpL-gvpM and gvpA-gvpC-gvpN-gvpO) allows H.volcanii to produce gas vesicles. A similar region restores gas vesicle production in H.halobium without the p-vac locus, but it still has the c-vac locus. The protein is Protein GvpD1 (gvpD11) of Halobacterium salinarum (strain ATCC 700922 / JCM 11081 / NRC-1) (Halobacterium halobium).